A 480-amino-acid chain; its full sequence is Glycerol 3-phosphate dehydrogenase (480 aa).

Residues isoleucine 12, glutamate 31, 40–41, and 45–47 contribute to the FAD site; these read TT and SAI. Positions 45 and 49 each coordinate sn-glycerol 3-phosphate. Histidine 49 serves as the catalytic Proton acceptor. Valine 172 contributes to the FAD binding site. Residues lysine 249 and arginine 310 each contribute to the sn-glycerol 3-phosphate site. 335–336 lines the FAD pocket; it reads IE. Serine 337 contacts sn-glycerol 3-phosphate. Residue serine 341 coordinates FAD. [2Fe-2S] cluster contacts are provided by cysteine 400, cysteine 402, cysteine 437, and cysteine 442.

[2Fe-2S] cluster serves as cofactor.

It carries out the reaction sn-glycerol 3-phosphate + A = dihydroxyacetone phosphate + AH2. Its pathway is polyol metabolism; glycerol degradation via glycerol kinase pathway; glycerone phosphate from sn-glycerol 3-phosphate (aerobic route): step 1/1. Functionally, catalyzes the dehydrogenation of glycerol 3-phosphate to dihydroxyacetone phosphate. Is probably involved in anaerobic glycerol metabolism. Active in vitro with the artificial electron acceptor 2,6-dichlorophenolindophenol (DCPIP), but not with NAD or NADP. Also displays a very low oxidase activity in vitro on glycerol 3-phosphate with O2 as the electron acceptor, but this activity is most likely not physiological. This chain is Glycerol 3-phosphate dehydrogenase, found in Caloramator mitchellensis.